The chain runs to 152 residues: Xanthine-guanine phosphoribosyltransferase (152 aa).

5-phospho-alpha-D-ribose 1-diphosphate is bound by residues 37–38 (RG), Arg69, and 88–96 (DDLVDTGGT). Arg69 is a binding site for GMP. Asp89 contributes to the Mg(2+) binding site. Guanine is bound by residues Asp92 and Ile135. Residues Asp92 and Ile135 each coordinate xanthine. GMP-binding positions include 92-96 (DTGGT) and 134-135 (WI).

This sequence belongs to the purine/pyrimidine phosphoribosyltransferase family. XGPT subfamily. As to quaternary structure, homotetramer. Mg(2+) serves as cofactor.

It is found in the cell inner membrane. It catalyses the reaction GMP + diphosphate = guanine + 5-phospho-alpha-D-ribose 1-diphosphate. The catalysed reaction is XMP + diphosphate = xanthine + 5-phospho-alpha-D-ribose 1-diphosphate. It carries out the reaction IMP + diphosphate = hypoxanthine + 5-phospho-alpha-D-ribose 1-diphosphate. It functions in the pathway purine metabolism; GMP biosynthesis via salvage pathway; GMP from guanine: step 1/1. The protein operates within purine metabolism; XMP biosynthesis via salvage pathway; XMP from xanthine: step 1/1. In terms of biological role, purine salvage pathway enzyme that catalyzes the transfer of the ribosyl-5-phosphate group from 5-phospho-alpha-D-ribose 1-diphosphate (PRPP) to the N9 position of the 6-oxopurines guanine and xanthine to form the corresponding ribonucleotides GMP (guanosine 5'-monophosphate) and XMP (xanthosine 5'-monophosphate), with the release of PPi. To a lesser extent, also acts on hypoxanthine. The chain is Xanthine-guanine phosphoribosyltransferase from Shigella boydii serotype 4 (strain Sb227).